Here is an 887-residue protein sequence, read N- to C-terminus: MEKAKLTKNLKLKIKNAQLTKAAGLDKLKQKLAQAGSSETKSSSEKPSTKVPEKIAKEKVVKKKSVVDPGVPTMTEPVSAENSPRRIRAKNHSSFVSEDLNSPQPPVPVDSDASAFSDSAVVEEVDSFVETEQEISVSTPPPPVTEETEVVAKEPPAPKKEPEVVVKKEPPKSVVSIKSNFGPTGKHINHLLAKTFKAPKKEDKPAPKEKTKTTQTKPQQSSDASNDKHHSPTNRTSQPFYRRDVSKKSGSDFRDRAKKDDNPKAFTGRDRYGLNDSSDDDKWRKKRVQKTKKHYEEHAIQRPTHIKVPLPITIKDLAAEMKLKASELIQKMFIHGMTYVVNDVLDNETTVQFIGLEFGCTIDIDSSEQDKLCIESNTVKEEIQETDPSKLITRPPIVAFMGHVDHGKTTLIDSLRKTNVAAVEAGAITQHMGAFCCSTPVGNLTILDTPGHEAFSAMRARGAEVCDIVVLVVAGDEGIKEQTLEAVKHARAANITIVVAINKCDKPNFNADTIYRQLAEIELLPEAWGGTTVTINTSAKTGEGLSELLEMLALQAEVLELKANPSARARGLVIESELHKGLGAVATILVQNGTLHLGEALVFNDCYGKVKTMHNEHNQLMKSASPSIPALITGLSSMPKAGDPFVVVKNEKTAKEIVGARLAGQQKFALQKKRPNFDAMLQNKKILKLIIKADVQGSIEALANSILKITSDKVSAEILANSVGEISESDIRLAAASKAVIIGFHTGIESHAESLIKNLGVKVQLFNIIYHAVDAVKEMMTALLDPIAEEKNLGSAEIKETFKSSQLGTIYGCLVSEGTMTRNQKVRVVRGNEIVWKGNLSSLKRIKEDVKEVKKGFECGILLEGCQHAQVGDILQCYEVIYHPQKL.

Disordered regions lie at residues lysine 31–isoleucine 87, serine 94–alanine 113, and valine 129–lysine 285. Residues serine 42–lysine 59 show a composition bias toward basic and acidic residues. Basic and acidic residues-rich tracts occupy residues valine 150–proline 171 and proline 199–lysine 212. Low complexity predominate over residues threonine 213–aspartate 223. Positions tyrosine 241–glycine 273 are enriched in basic and acidic residues. Residues threonine 393 to lysine 562 enclose the tr-type G domain. Residues glycine 402–threonine 409 form a G1 region. Glycine 402–threonine 409 lines the GTP pocket. The segment at alanine 427–histidine 431 is G2. Residues aspartate 448 to glycine 451 are G3. GTP-binding positions include aspartate 448–histidine 452 and asparagine 502–aspartate 505. Residues asparagine 502–aspartate 505 are G4. Residues serine 538–lysine 540 form a G5 region.

It belongs to the TRAFAC class translation factor GTPase superfamily. Classic translation factor GTPase family. IF-2 subfamily.

The protein localises to the cytoplasm. Its function is as follows. One of the essential components for the initiation of protein synthesis. Protects formylmethionyl-tRNA from spontaneous hydrolysis and promotes its binding to the 30S ribosomal subunits. Also involved in the hydrolysis of GTP during the formation of the 70S ribosomal complex. In Chlamydia caviae (strain ATCC VR-813 / DSM 19441 / 03DC25 / GPIC) (Chlamydophila caviae), this protein is Translation initiation factor IF-2.